The sequence spans 328 residues: Glutathionyl-hydroquinone reductase YqjG (328 aa).

Catalysis depends on Cys63, which acts as the Nucleophile. Glutathione is bound by residues Trp96, 130 to 133 (RVTV), and 148 to 149 (ES). A GST C-terminal domain is found at 172–296 (PPALQTKIDE…VNFDHIRNHY (125 aa)). Catalysis depends on Tyr195, which acts as the Proton donor/acceptor. Residues 203–311 (QEAYDEAVAK…TINPTGIISI (109 aa)) form a dimerization region.

This sequence belongs to the GST superfamily. Xi-class GSH transferase family. In terms of assembly, homodimer.

It carries out the reaction 2-(glutathione-S-yl)-hydroquinone + glutathione = hydroquinone + glutathione disulfide. Its function is as follows. Catalyzes glutathione (GSH)-dependent reduction of glutathionyl-hydroquinones (GS-HQs) to the corresponding hydroquinones. Can use a variety of GS-HQs as substrates, such as GS-p-hydroquinone (GS-HQ), GS-hydroxy-p-hydroquinone (GS-HHQ), GS-methyl-p-hydroquinone (GS-MHQ), GS-menadiol, and GS-trichloro-p-hydroquinone (GS-TriCH). Also displays GSH-dependent disulfide-bond reduction activity toward HED (2-hydroxyethyl disulfide), and is able to catalyze DMA (dimethylarsinate) reduction. Exhibits no GSH transferase activity with 1-chloro-2,4-dinitrobenzene (CDNB). The protein is Glutathionyl-hydroquinone reductase YqjG (yqjG) of Escherichia coli (strain K12).